The primary structure comprises 351 residues: O-methyltransferase apf6 (351 aa).

S-adenosyl-L-methionine-binding positions include 231–232 (GG), 279–280 (NF), and Arg-295. His-299 acts as the Proton acceptor in catalysis.

Belongs to the class I-like SAM-binding methyltransferase superfamily. Cation-independent O-methyltransferase family.

It participates in secondary metabolite biosynthesis. O-methyltransferase; part of the gene cluster that mediates the biosynthesis of the cyclic tetrapeptide apicidin F (APF). The non-ribosomal peptide synthetase apf1 incorporates four different amino acids to produce apicidin F: L-phenylalanine, D-pipecolic acid (D-pip), N-methoxy-L-tryptophan and L-2-aminooctanedioic acid. L-Phenylalanine is the only proteinogenic amino acid directly used by apf1. The 3 other apf1 substrates are non-proteinogenic and have to be modified by other enzymes of the cluster. Lysine is converted to delta-1-pyrroline-5-carboxylate (P5C) which is reduced to L-pipecolic acid (L-pip) by apf3. L-pip is epimerized to D-pip, probably by apf1 activity, prior to incorporation. L-Tryptophan is N-oxidyzed by one of the cytochrome P450 monooxygenases (apf7 or apf8), and further methylated at the hydroxy group by the O-methyltransferase apf6 to yield N-methoxy-L-tryptophan. The synthesis of the fourth apf1 substrate is more complex. The fatty acid synthase apf5 is involved in the synthesis of the octanoic acid backbone of L-2-aminooctanedioic acid by fixing one acetyl-CoA unit and three malonyl-CoA units. Then one of the cytochrome P450 monooxygenases (apf7 or apf8) may oxidize this backbone to 2-oxooctanoic acid. The aminotransferase apf4 is predicted to catalyze the exchange of the keto group with an amino group. The next step would be the oxidation of 2-aminooctanoic acid by one of the cytochrome P450 monooxygenases (apf7 or apf8). The last step is the oxidation of 2-amino-8-hydroxyoctanoic acid to 2-aminooctanedioic acid is catalyzed by the FAD-dependent monooxygenase apf9. In Gibberella fujikuroi (strain CBS 195.34 / IMI 58289 / NRRL A-6831) (Bakanae and foot rot disease fungus), this protein is O-methyltransferase apf6.